Reading from the N-terminus, the 823-residue chain is Hypoxia-inducible factor 1-alpha (823 aa).

The interval methionine 1 to arginine 30 is disordered. Residues methionine 1–alanine 401 form an interaction with TSGA10 region. A compositionally biased stretch (basic and acidic residues) spans asparagine 8 to arginine 30. The bHLH domain maps to arginine 17–arginine 70. A DNA-binding region spans residues lysine 21 to arginine 30. A PAS 1 domain is found at lysine 85–glycine 158. The required for heterodimer formation with ARNT stretch occupies residues arginine 170–valine 191. Positions proline 228–glycine 298 constitute a PAS 2 domain. A Phosphoserine; by CK1 modification is found at serine 247. Residues threonine 302–isoleucine 345 enclose the PAC domain. The tract at residues alanine 401–glutamine 600 is ODD. Proline 402 is modified (4-hydroxyproline). A compositionally biased stretch (polar residues) spans isoleucine 494 to serine 517. The disordered stretch occupies residues isoleucine 494–phenylalanine 521. Residues phenylalanine 531–arginine 575 are NTAD. Lysine 532 carries the N6-acetyllysine; alternate modification. A Glycyl lysine isopeptide (Lys-Gly) (interchain with G-Cter in ubiquitin); alternate cross-link involves residue lysine 532. Glycyl lysine isopeptide (Lys-Gly) (interchain with G-Cter in ubiquitin) cross-links involve residues lysine 538 and lysine 547. Serine 551 carries the post-translational modification Phosphoserine; by GSK3-beta. Threonine 555 carries the phosphothreonine; by GSK3-beta modification. Residue proline 564 is modified to 4-hydroxyproline. Serine 576 bears the Phosphoserine; by PLK3 mark. The tract at residues serine 576 to glutamine 782 is ID. Disordered regions lie at residues serine 581–threonine 602 and proline 639–proline 685. At serine 589 the chain carries Phosphoserine; by GSK3-beta. A compositionally biased stretch (polar residues) spans alanine 651–proline 666. Position 654 is a phosphoserine; by PLK3 (serine 654). Lysine 706 bears the N6-acetyllysine mark. A Nuclear localization signal motif is present at residues arginine 715 to histidine 721. Residues serine 783–asparagine 823 are CTAD. An S-nitrosocysteine modification is found at cysteine 797. Residue asparagine 800 is modified to (3S)-3-hydroxyasparagine.

As to quaternary structure, interacts with the ARNT; forms a heterodimer that binds core DNA sequence 5'-TACGTG-3' within the hypoxia response element (HRE) of target gene promoters. Interacts with COPS5; the interaction increases the transcriptional activity of HIF1A through increased stability. Interacts with EP300 (via TAZ-type 1 domains); the interaction is stimulated in response to hypoxia and inhibited by CITED2. Interacts with CREBBP (via TAZ-type 1 domains). Interacts with NCOA1, NCOA2, APEX1 and HSP90. Interacts (hydroxylated within the ODD domain) with VHLL (via beta domain); the interaction, leads to polyubiquitination and subsequent HIF1A proteasomal degradation. During hypoxia, sumoylated HIF1A also binds VHL; the interaction promotes the ubiquitination of HIF1A. Interacts with SENP1; the interaction desumoylates HIF1A resulting in stabilization and activation of transcription. Interacts (via the ODD domain) with NAA10; the interaction appears not to acetylate HIF1A nor have any affect on protein stability, during hypoxia. Interacts with RWDD3; the interaction enhances HIF1A sumoylation. Interacts with TSGA10. Interacts with HIF3A. Interacts with RORA (via the DNA binding domain); the interaction enhances HIF1A transcription under hypoxia through increasing protein stability. Interaction with PSMA7 inhibits the transactivation activity of HIF1A under both normoxic and hypoxia-mimicking conditions. Interacts with USP20. Interacts with RACK1; promotes HIF1A ubiquitination and proteasome-mediated degradation. Interacts (via N-terminus) with USP19. Interacts with SIRT2. Interacts (deacetylated form) with EGLN1. Interacts with CBFA2T3. Interacts with HSP90AA1 and HSP90AB1. Interacts with DCUN1D1; this interaction increases the interaction between VHL and DCUN1D1. Interacts with HIF1AN. In terms of processing, S-nitrosylation of Cys-797 may be responsible for increased recruitment of p300 coactivator necessary for transcriptional activity of HIF-1 complex. Post-translationally, acetylation of Lys-532 by ARD1 increases interaction with VHL and stimulates subsequent proteasomal degradation. Deacetylation of Lys-706 by SIRT2 increases its interaction with and hydroxylation by EGLN1 thereby inactivating HIF1A activity by inducing its proteasomal degradation. Ubiquitinated; in normoxia, following hydroxylation and interaction with VHL. Lys-532 appears to be the principal site of ubiquitination. Clioquinol, the Cu/Zn-chelator, inhibits ubiquitination through preventing hydroxylation at Asn-800. Ubiquitinated by E3 ligase VHL. Deubiquitinated by UCHL1. In terms of processing, requires phosphorylation for DNA-binding. Phosphorylation at Ser-247 by CSNK1D/CK1 represses kinase activity and impairs ARNT binding. Phosphorylation by GSK3-beta and PLK3 promote degradation by the proteasome. Post-translationally, the iron and 2-oxoglutarate dependent 3-hydroxylation of asparagine is (S) stereospecific within HIF CTAD domains. Sumoylated; with SUMO1 under hypoxia. Sumoylation is enhanced through interaction with RWDD3. Both sumoylation and desumoylation seem to be involved in the regulation of its stability during hypoxia. Sumoylation can promote either its stabilization or its VHL-dependent degradation by promoting hydroxyproline-independent HIF1A-VHL complex binding, thus leading to HIF1A ubiquitination and proteasomal degradation. Desumoylation by SENP1 increases its stability amd transcriptional activity. There is a disaccord between various publications on the effect of sumoylation and desumoylation on its stability and transcriptional activity. In terms of processing, in normoxia, is hydroxylated on Pro-402 and Pro-564 in the oxygen-dependent degradation domain (ODD) by EGLN1/PHD2 and EGLN2/PHD1. EGLN3/PHD3 has also been shown to hydroxylate Pro-564. The hydroxylated prolines promote interaction with VHL, initiating rapid ubiquitination and subsequent proteasomal degradation. Deubiquitinated by USP20. Under hypoxia, proline hydroxylation is impaired and ubiquitination is attenuated, resulting in stabilization. In normoxia, is hydroxylated on Asn-800 by HIF1AN, thus abrogating interaction with CREBBP and EP300 and preventing transcriptional activation. Repressed by iron ion, via Fe(2+) prolyl hydroxylase (PHD) enzymes-mediated hydroxylation and subsequent proteasomal degradation.

Its subcellular location is the cytoplasm. It localises to the nucleus. Induced by reactive oxygen species (ROS). Its function is as follows. Functions as a master transcriptional regulator of the adaptive response to hypoxia. Under hypoxic conditions, activates the transcription of over 40 genes, including erythropoietin, glucose transporters, glycolytic enzymes, vascular endothelial growth factor, HILPDA, and other genes whose protein products increase oxygen delivery or facilitate metabolic adaptation to hypoxia. Plays an essential role in embryonic vascularization, tumor angiogenesis and pathophysiology of ischemic disease. Heterodimerizes with ARNT; heterodimer binds to core DNA sequence 5'-TACGTG-3' within the hypoxia response element (HRE) of target gene promoters. Activation requires recruitment of transcriptional coactivators such as CREBBP and EP300. Activity is enhanced by interaction with NCOA1 and/or NCOA2. Interaction with redox regulatory protein APEX1 seems to activate CTAD and potentiates activation by NCOA1 and CREBBP. Involved in the axonal distribution and transport of mitochondria in neurons during hypoxia. The protein is Hypoxia-inducible factor 1-alpha (HIF1A) of Bos taurus (Bovine).